Consider the following 220-residue polypeptide: Claudin-3 (220 aa).

The Cytoplasmic segment spans residues 1-8; the sequence is MSMGLEIT. A helical membrane pass occupies residues 9–29; sequence GTALAVLGWLGTIVCCALPMW. Residues 30 to 80 are Extracellular-facing; the sequence is RVSAFIGSNIITSQNIWEGLWMNCVVQSTGQMQCKVYDSLLALPQDLQAAR. The helical transmembrane segment at 81-101 threads the bilayer; sequence ALIVVAILLAAFGLLVALVGA. The Cytoplasmic portion of the chain corresponds to 102–115; that stretch reads QCTNCVQDDTAKAK. A helical membrane pass occupies residues 116–136; that stretch reads ITIVAGVLFLLAALLTLVPVS. Residues 137–159 are Extracellular-facing; the sequence is WSANTIIRDFYNPVVPEAQKREM. A helical transmembrane segment spans residues 160-180; the sequence is GAGLYVGWAAAALQLLGGALL. The Cytoplasmic portion of the chain corresponds to 181-220; that stretch reads CCSCPPREKKYTATKVVYSAPRSTGPGASLGTGYDRKDYV. Tyrosine 198 carries the post-translational modification Phosphotyrosine. 2 positions are modified to phosphoserine: serine 199 and serine 209. The interval 219–220 is interactions with TJP1, TJP2 and TJP3; it reads YV.

This sequence belongs to the claudin family. Can form homo- and heteropolymers with other CLDN. Homopolymers interact with CLDN1 and CLDN2 homopolymers. Interacts in cis (within the same plasma membrane) with CLDN19. Directly interacts with TJP1/ZO-1, TJP2/ZO-2 and TJP3/ZO-3.

The protein resides in the cell junction. It localises to the tight junction. Its subcellular location is the cell membrane. Barrier-forming claudin. Plays a major role in tight junction-specific obliteration of the intercellular space, through calcium-independent cell-adhesion activity. The polypeptide is Claudin-3 (CLDN3) (Homo sapiens (Human)).